We begin with the raw amino-acid sequence, 492 residues long: GDP-fucose protein O-fucosyltransferase 4 (492 aa).

Residues 1–7 (MAAGPIR) are Cytoplasmic-facing. Residues 8-24 (VVLVLLGVLSVCAASGH) traverse the membrane as a helical; Signal-anchor for type II membrane protein segment. The Lumenal portion of the chain corresponds to 25–492 (GSVAEREAGG…HEIFMKRQHL (468 aa)). Residue Asn-166 is glycosylated (N-linked (GlcNAc...) asparagine). Cys-389 and Cys-392 form a disulfide bridge. N-linked (GlcNAc...) asparagine glycosylation occurs at Asn-443.

The protein belongs to the glycosyltransferase 10 family.

The protein resides in the endoplasmic reticulum membrane. It carries out the reaction L-threonyl-[protein] + GDP-beta-L-fucose = 3-O-(alpha-L-fucosyl)-L-threonyl-[protein] + GDP + H(+). It catalyses the reaction L-seryl-[protein] + GDP-beta-L-fucose = 3-O-(alpha-L-fucosyl)-L-seryl-[protein] + GDP + H(+). The protein operates within protein modification; protein glycosylation. Protein O-fucosyltransferase that specifically catalyzes O-fucosylation of serine or threonine residues in EMI domains of target proteins, such as MMRN1, MMRN2 and EMID1. Attaches fucose through an O-glycosidic linkage. O-fucosylation of EMI domain-containing proteins may be required for facilitating protein folding and secretion. Also shows minor alpha-(1,3)-fucosyltransferase activity toward activity toward biantennary N-glycan acceptors. However, this was tested with a library of synthetic substrates and this activity is unsure in vivo. This is GDP-fucose protein O-fucosyltransferase 4 from Homo sapiens (Human).